The sequence spans 265 residues: Orotidine 5'-phosphate decarboxylase (265 aa).

Substrate is bound by residues Asp-38, 60 to 62 (KTH), 91 to 100 (DRKFADIGNT), Tyr-213, and Arg-232. The Proton donor role is filled by Lys-93.

Belongs to the OMP decarboxylase family.

The catalysed reaction is orotidine 5'-phosphate + H(+) = UMP + CO2. Its pathway is pyrimidine metabolism; UMP biosynthesis via de novo pathway; UMP from orotate: step 2/2. The sequence is that of Orotidine 5'-phosphate decarboxylase (pyrG) from Mucor circinelloides f. lusitanicus (Mucor racemosus var. lusitanicus).